Reading from the N-terminus, the 265-residue chain is tRNA pseudouridine synthase A (265 aa).

Asp58 (nucleophile) is an active-site residue. Tyr116 contributes to the substrate binding site.

This sequence belongs to the tRNA pseudouridine synthase TruA family. In terms of assembly, homodimer.

The catalysed reaction is uridine(38/39/40) in tRNA = pseudouridine(38/39/40) in tRNA. Functionally, formation of pseudouridine at positions 38, 39 and 40 in the anticodon stem and loop of transfer RNAs. This Neisseria gonorrhoeae (strain ATCC 700825 / FA 1090) protein is tRNA pseudouridine synthase A.